The primary structure comprises 493 residues: Proline--tRNA ligase (493 aa).

This sequence belongs to the class-II aminoacyl-tRNA synthetase family. ProS type 3 subfamily. Homodimer.

It localises to the cytoplasm. It carries out the reaction tRNA(Pro) + L-proline + ATP = L-prolyl-tRNA(Pro) + AMP + diphosphate. Catalyzes the attachment of proline to tRNA(Pro) in a two-step reaction: proline is first activated by ATP to form Pro-AMP and then transferred to the acceptor end of tRNA(Pro). The polypeptide is Proline--tRNA ligase (Parabacteroides distasonis (strain ATCC 8503 / DSM 20701 / CIP 104284 / JCM 5825 / NCTC 11152)).